We begin with the raw amino-acid sequence, 185 residues long: Putative sulfur carrier protein YrkF (185 aa).

The active-site Cysteine persulfide intermediate is the Cys15. The 85-residue stretch at 101-185 (SDESLNILDV…GMRDWTGKTE (85 aa)) folds into the Rhodanese domain.

The protein belongs to the sulfur carrier protein TusA family.

The polypeptide is Putative sulfur carrier protein YrkF (yrkF) (Bacillus subtilis (strain 168)).